Here is a 674-residue protein sequence, read N- to C-terminus: Tripartite terminase subunit 3 (674 aa).

Positions 212–219 match the Walker A motif motif; the sequence is VPRRHGKT. Positions 305–310 match the Walker B motif motif; the sequence is LLLVDE. The active-site For ATPase activity is Glu-310. Residues Asp-463 and Glu-534 each act as for nuclease activity in the active site. The required for interaction with UL56 and DNA packaging stretch occupies residues 580–600; sequence GRDKALAVEQFISRFNSGYIK. Asp-651 serves as the catalytic For nuclease activity.

This sequence belongs to the herpesviridae TRM3 protein family. In terms of assembly, interacts with the terminase subunits TRM1 and TRM2. Interacts with portal protein.

It is found in the host nucleus. Functionally, component of the molecular motor that translocates viral genomic DNA in empty capsid during DNA packaging. Forms a tripartite terminase complex together with TRM1 and TRM2 in the host cytoplasm. Once the complex reaches the host nucleus, it interacts with the capsid portal vertex. This portal forms a ring in which genomic DNA is translocated into the capsid. TRM3 carries an RNase H-like nuclease activity that plays an important role for the cleavage of concatemeric viral DNA into unit length genomes. The sequence is that of Tripartite terminase subunit 3 from Homo sapiens (Human).